Consider the following 433-residue polypeptide: Hps1-dma1 cluster O-methyltransferase (433 aa).

The disordered stretch occupies residues 36 to 55 (NGHPERSLNSTDSVRLSDAP). D285 contributes to the S-adenosyl-L-methionine binding site. H331 serves as the catalytic Proton acceptor.

This sequence belongs to the class I-like SAM-binding methyltransferase superfamily. Cation-independent O-methyltransferase family. COMT subfamily.

Its pathway is secondary metabolite biosynthesis. Functionally, O-methyltransferase; part of the hps1-dma1 gene cluster that probably mediates the biosynthesis a derivative of cyclopiazonic acid (CPA). The hybrid polyketide synthase-nonribosomal peptide synthetase (PKS-NRPS) nps1 might incorporates acetyl-CoA, malonyl-CoA, and tryptophan (Trp) and utilizes a C-terminal redox-incompetent reductase domain to make and release the tryptophan tetramic acid, cyclo-acetoacetyl-L-tryptophan (c-AATrp), as the first intermediate in the pathway. In addition, the cluster also includes the tryptophan dimethylallyltransferase dma1, the FAD-dependent oxidoreductase toxD, the cytochrome P450 monooxygenase cyp3.1 and the methyltransferase DOTSEDRAFT_139328; the latter 2 being not present in all CPA-producing fungi but involved in additional modifications that occur in biosynthesis the of a range of CPA and CPA-like products. Further studies are required to clarify whether the CPA-like hps1-dma1 cluster is functional or a non-functional relic reflecting evolution of D.septosporum. The chain is Hps1-dma1 cluster O-methyltransferase from Dothistroma septosporum (strain NZE10 / CBS 128990) (Red band needle blight fungus).